A 77-amino-acid chain; its full sequence is Translation initiation factor IF-1, chloroplastic (77 aa).

The region spanning 1 to 71 (MKEQKWIHEG…TRGRIIYRLR (71 aa)) is the S1-like domain.

Belongs to the IF-1 family. Component of the 30S ribosomal translation pre-initiation complex which assembles on the 30S ribosome in the order IF-2 and IF-3, IF-1 and N-formylmethionyl-tRNA(fMet); mRNA recruitment can occur at any time during PIC assembly.

Its subcellular location is the plastid. The protein localises to the chloroplast. In terms of biological role, one of the essential components for the initiation of protein synthesis. Stabilizes the binding of IF-2 and IF-3 on the 30S subunit to which N-formylmethionyl-tRNA(fMet) subsequently binds. Helps modulate mRNA selection, yielding the 30S pre-initiation complex (PIC). Upon addition of the 50S ribosomal subunit IF-1, IF-2 and IF-3 are released leaving the mature 70S translation initiation complex. This Garrya elliptica (Wavyleaf silktassel) protein is Translation initiation factor IF-1, chloroplastic.